A 765-amino-acid polypeptide reads, in one-letter code: Probable dipeptidyl peptidase 4 (765 aa).

The N-terminal stretch at 1–14 (MKWSILLLVGCAAA) is a signal peptide. N-linked (GlcNAc...) asparagine glycosylation is found at Asn-35, Asn-78, Asn-101, Asn-110, Asn-169, Asn-218, Asn-465, and Asn-490. Ser-613 serves as the catalytic Charge relay system. Asn-665 carries an N-linked (GlcNAc...) asparagine glycan. Residues Asp-690 and His-725 each act as charge relay system in the active site.

Belongs to the peptidase S9B family.

It localises to the secreted. The catalysed reaction is Release of an N-terminal dipeptide, Xaa-Yaa-|-Zaa-, from a polypeptide, preferentially when Yaa is Pro, provided Zaa is neither Pro nor hydroxyproline.. Its function is as follows. Extracellular dipeptidyl-peptidase which removes N-terminal dipeptides sequentially from polypeptides having unsubstituted N-termini provided that the penultimate residue is proline. The chain is Probable dipeptidyl peptidase 4 (dpp4) from Neosartorya fischeri (strain ATCC 1020 / DSM 3700 / CBS 544.65 / FGSC A1164 / JCM 1740 / NRRL 181 / WB 181) (Aspergillus fischerianus).